Consider the following 404-residue polypeptide: MHEMQGILLCSGGGTRMPVLTRHVQKCLLPVVGVPMFLYPLSSLLRTGITDIKIFVREVLQLTLEKEVKKSKLLEKYPAHIEYICVNQEDFGTADLLKNHHSKITKDALIVSCDFISDASLIPLVDFFRATNSTLVALIADTCVNAPAPGSKSKKPKATDVMAIVESTGQLAFLCGDDDFDAPLVMEKSLKIFPSIKLTSKYNDCHVYAIRHKVLLNLSKSKHISSFKADFVPLLIDKQFEPDSDIKCFAYRLPHENGFVTAHANTLGSYFEVNKAIQKSFTRLMEYRGNGKNFNYKTDKIAAHESRIEESAEIDKDSVIKRSFISDNCRIGEKTKLKESIIAKGVVIGNGASISNSIICDGVEIGENADVTNCIVAKDQKVPAKGKVQNEVVEDGEDEEWTDD.

Belongs to the eIF-2B gamma/epsilon subunits family. In terms of assembly, component of the translation initiation factor 2B (eIF2B) complex which is a heterodecamer of two sets of five different subunits: alpha, beta, gamma, delta and epsilon. Subunits alpha, beta and delta comprise a regulatory subcomplex and subunits epsilon and gamma comprise a catalytic subcomplex. Within the complex, the hexameric regulatory complex resides at the center, with the two heterodimeric catalytic subcomplexes bound on opposite sides.

Its subcellular location is the cytoplasm. It is found in the cytosol. Functionally, acts as a component of the translation initiation factor 2B (eIF2B) complex, which catalyzes the exchange of GDP for GTP on the eukaryotic initiation factor 2 (eIF2) complex gamma subunit. Its guanine nucleotide exchange factor activity is repressed when bound to eIF2 complex phosphorylated on the alpha subunit, thereby limiting the amount of methionyl-initiator methionine tRNA available to the ribosome and consequently global translation is repressed. This Caenorhabditis elegans protein is Translation initiation factor eIF2B subunit gamma.